Here is a 154-residue protein sequence, read N- to C-terminus: Fibroblast growth factor 2 (154 aa).

Residues 1-9 (MAAGSITSL) constitute a propeptide that is removed on maturation. Residues 1–20 (MAAGSITSLPALPEDGGGAF) are disordered. Residue N35 participates in heparin binding. The residue at position 81 (Y81) is a Phosphotyrosine; by TEC. K94 participates in a covalent cross-link: Glycyl lysine isopeptide (Lys-Gly) (interchain with G-Cter in SUMO1). The tract at residues 127-143 (KRTGQYKLGSKTGPGQK) is heparin-binding.

It belongs to the heparin-binding growth factors family. Monomer. Homodimer. Interacts with FGFR1, FGFR2, FGFR3 and FGFR4. Affinity between fibroblast growth factors (FGFs) and their receptors is increased by heparan sulfate glycosaminoglycans that function as coreceptors. Interacts with CSPG4, FGFBP1 and TEC. Found in a complex with FGFBP1, FGF1 and FGF2. Interacts with FGFBP3. Interacts with integrin ITGAV:ITGB3; the interaction is required for FGF2 signaling. Interacts with SNORC (via the extracellular domain). Interacts with GPC3. Post-translationally, phosphorylation at Tyr-81 regulates FGF2 unconventional secretion. Found in all tissues examined.

The protein resides in the secreted. Its subcellular location is the nucleus. Acts as a ligand for FGFR1, FGFR2, FGFR3 and FGFR4. Also acts as an integrin ligand which is required for FGF2 signaling. Binds to integrin ITGAV:ITGB3. Plays an important role in the regulation of cell survival, cell division, cell differentiation and cell migration. Functions as a potent mitogen in vitro. Can induce angiogenesis. Mediates phosphorylation of ERK1/2 and thereby promotes retinal lens fiber differentiation. In Rattus norvegicus (Rat), this protein is Fibroblast growth factor 2 (Fgf2).